The chain runs to 331 residues: MSNITSASAAQIDHASSWNFRFAVFCSQLSIISTFILSVIAVKWIFTKSTFQTSTKIILVFNFVYANIHQFMYAIISLGMAYKGIFLLDETCEWLITEKDCLLYTEVLYVGISGMIYSQTGILIERAFATLYRNYTAKISRLVGIIISTFVLIMSIATYQIIISDDPLEGVVLSCFVPAQHSAQRANTFLFIALILTFVNLISSAAVMFYNKRLEYSIRYKVRERFKKREAIYSTHTICVVCMAQFVTMLVYSSGVLILRCNMSNILLTTFYKLITWVYTVQYNALLFPLILIFRIRATKLSRTKKIQDITSANQSQTEHYNQITSAWKIT.

A run of 7 helical transmembrane segments spans residues 22 to 42 (FAVF…VIAV), 57 to 77 (IILV…AIIS), 104 to 124 (YTEV…GILI), 143 to 163 (VGII…QIII), 189 to 209 (FLFI…AVMF), 238 to 258 (ICVV…GVLI), and 274 to 294 (LITW…ILIF).

It belongs to the nematode receptor-like protein sra family.

Its subcellular location is the membrane. The protein is Serpentine receptor class alpha-1 (sra-1) of Caenorhabditis elegans.